A 556-amino-acid chain; its full sequence is Formate--tetrahydrofolate ligase (556 aa).

Residue 65–72 (TPAGEGKS) participates in ATP binding.

Belongs to the formate--tetrahydrofolate ligase family.

The catalysed reaction is (6S)-5,6,7,8-tetrahydrofolate + formate + ATP = (6R)-10-formyltetrahydrofolate + ADP + phosphate. The protein operates within one-carbon metabolism; tetrahydrofolate interconversion. The protein is Formate--tetrahydrofolate ligase of Clostridium perfringens (strain 13 / Type A).